A 543-amino-acid chain; its full sequence is Chaperonin GroEL 2 (543 aa).

ATP is bound by residues 29-32 (TLGP), 86-90 (DGTTT), glycine 413, 479-481 (NAA), and aspartate 495.

The protein belongs to the chaperonin (HSP60) family. Forms a cylinder of 14 subunits composed of two heptameric rings stacked back-to-back. Interacts with the co-chaperonin GroES.

The protein localises to the cytoplasm. The enzyme catalyses ATP + H2O + a folded polypeptide = ADP + phosphate + an unfolded polypeptide.. Functionally, together with its co-chaperonin GroES, plays an essential role in assisting protein folding. The GroEL-GroES system forms a nano-cage that allows encapsulation of the non-native substrate proteins and provides a physical environment optimized to promote and accelerate protein folding. The protein is Chaperonin GroEL 2 of Synechococcus sp. (strain CC9311).